We begin with the raw amino-acid sequence, 481 residues long: Cysteine--tRNA ligase (481 aa).

Cysteine 27 lines the Zn(2+) pocket. The 'HIGH' region motif lies at 29 to 39 (PTVYNYAHIGN). 3 residues coordinate Zn(2+): cysteine 222, histidine 247, and glutamate 251. The short motif at 279 to 283 (KMSKS) is the 'KMSKS' region element. ATP is bound at residue lysine 282.

It belongs to the class-I aminoacyl-tRNA synthetase family. In terms of assembly, monomer. Requires Zn(2+) as cofactor.

Its subcellular location is the cytoplasm. The catalysed reaction is tRNA(Cys) + L-cysteine + ATP = L-cysteinyl-tRNA(Cys) + AMP + diphosphate. The sequence is that of Cysteine--tRNA ligase from Borrelia turicatae (strain 91E135).